Here is a 483-residue protein sequence, read N- to C-terminus: Serine protease HTRA4 (483 aa).

The signal sequence occupies residues 1-30 (MSFQRLWAVRTQFLLLWLLLPAVPVPWAEA). The IGFBP N-terminal domain maps to 35–113 (VSLPCPDACD…GAWLGTCGCA (79 aa)). Intrachain disulfides connect Cys39/Cys65, Cys43/Cys67, Cys48/Cys68, Cys54/Cys71, Cys79/Cys93, and Cys87/Cys110. The serine protease stretch occupies residues 208 to 368 (GSGFIVSEDG…IPSDRIRQFL (161 aa)). Active-site charge relay system residues include His224, Asp254, and Ser332. The PDZ domain maps to 379–471 (KAPLQKKYLG…LSIIVLRGSQ (93 aa)).

The protein belongs to the peptidase S1C family.

It is found in the secreted. Functionally, serine protease. In Mus musculus (Mouse), this protein is Serine protease HTRA4 (Htra4).